The chain runs to 349 residues: Sensory histidine kinase/phosphatase NtrB (349 aa).

Residues 5-78 form the PAS domain; it reads IQPDAGQILN…SLAAGQGFTD (74 aa). The Histidine kinase domain occupies 136-349; sequence GLAHEIKNPL…EFSVYLPIRK (214 aa). His-139 is subject to Phosphohistidine; by autocatalysis. Lys-329 is an ATP binding site.

Autophosphorylated.

The protein resides in the cytoplasm. The catalysed reaction is ATP + protein L-histidine = ADP + protein N-phospho-L-histidine.. Member of the two-component regulatory system NtrB/NtrC, which controls expression of the nitrogen-regulated (ntr) genes in response to nitrogen limitation. Under conditions of nitrogen limitation, NtrB autophosphorylates and transfers the phosphoryl group to NtrC. In the presence of nitrogen, acts as a phosphatase that dephosphorylates and inactivates NtrC. In Salmonella typhi, this protein is Sensory histidine kinase/phosphatase NtrB (glnL).